A 214-amino-acid polypeptide reads, in one-letter code: RING-H2 finger protein ATL67 (214 aa).

The chain crosses the membrane as a helical span at residues 33 to 53 (LGFGYSIAIALGFLVLLSTVL). An RING-type; atypical zinc finger spans residues 138-180 (CSICLCEYKEAEMLRMMPECKHYFHLCCLDAWLKLNGSCPVCR).

This sequence belongs to the RING-type zinc finger family. ATL subfamily.

The protein localises to the membrane. It catalyses the reaction S-ubiquitinyl-[E2 ubiquitin-conjugating enzyme]-L-cysteine + [acceptor protein]-L-lysine = [E2 ubiquitin-conjugating enzyme]-L-cysteine + N(6)-ubiquitinyl-[acceptor protein]-L-lysine.. The protein operates within protein modification; protein ubiquitination. The protein is RING-H2 finger protein ATL67 (ATL67) of Arabidopsis thaliana (Mouse-ear cress).